The sequence spans 136 residues: Small ribosomal subunit protein uS9 (136 aa).

Residues 97-136 (SPDNRKPLKTEGHLSRDPRAKERRKYGLKKARKAPQFSKR) form a disordered region. Residues 98 to 116 (PDNRKPLKTEGHLSRDPRA) show a composition bias toward basic and acidic residues. Over residues 117-136 (KERRKYGLKKARKAPQFSKR) the composition is skewed to basic residues.

It belongs to the universal ribosomal protein uS9 family.

The chain is Small ribosomal subunit protein uS9 from Prochlorococcus marinus (strain MIT 9312).